We begin with the raw amino-acid sequence, 489 residues long: Zinc finger protein 58 (489 aa).

In terms of domain architecture, KRAB spans 2–73 (LSFWDVAIDF…KRQAAAAVHP (72 aa)). Residues 78-100 (NKCKDFSKAFFCKSLLTQHQRIR) form a C2H2-type 1; degenerate zinc finger. 14 consecutive C2H2-type zinc fingers follow at residues 106–128 (FKCE…KRIH), 134–156 (YKCE…QRVH), 162–184 (YKCE…KRIH), 190–212 (YKCE…QKNH), 218–240 (YKCE…QRIH), 246–268 (YKCE…QIIH), 274–296 (YKCA…QRIH), 302–324 (CKCK…QRIH), 330–352 (YKCG…QRFH), 358–380 (YKCE…KLRH), 386–408 (YKCE…QKIH), 410–432 (YKCG…QRVH), 438–460 (HVCE…QLVH), and 466–488 (YKCE…QGIH).

This sequence belongs to the krueppel C2H2-type zinc-finger protein family. In terms of tissue distribution, expressed in liver, testis and, at considerably lower levels, in brain, spleen and heart.

It is found in the nucleus. In terms of biological role, may have a role during differentiation processes. The polypeptide is Zinc finger protein 58 (Zfp58) (Mus musculus (Mouse)).